We begin with the raw amino-acid sequence, 154 residues long: Endoribonuclease YbeY (154 aa).

3 residues coordinate Zn(2+): histidine 113, histidine 117, and histidine 123.

Belongs to the endoribonuclease YbeY family. Zn(2+) is required as a cofactor.

It localises to the cytoplasm. In terms of biological role, single strand-specific metallo-endoribonuclease involved in late-stage 70S ribosome quality control and in maturation of the 3' terminus of the 16S rRNA. The polypeptide is Endoribonuclease YbeY (Vibrio parahaemolyticus serotype O3:K6 (strain RIMD 2210633)).